Reading from the N-terminus, the 74-residue chain is EMBRYO SURROUNDING FACTOR 1-like protein 4 (74 aa).

Positions 1–22 (MKSSHAYLVCILLLSLFSLHQC) are cleaved as a signal peptide. Cystine bridges form between C36–C51, C41–C70, C49–C66, and C52–C59.

This sequence belongs to the MEG family. As to expression, expressed in flowers.

This chain is EMBRYO SURROUNDING FACTOR 1-like protein 4 (ESFL4), found in Arabidopsis thaliana (Mouse-ear cress).